Reading from the N-terminus, the 279-residue chain is MSDEEVEHVEEQYEEEEEAQEEAPSPAEVHEPAPEVHVPEEVHEDALEDMREEEEEEEKPRPKLTAPKIPEGEKVDFDDIQKKRQNKDLMELQALIDSHFEARKKEEEELVALKERIEKRRAERAEQQRIRAEKERERQNRLAEEKARREEEDAKRRAEEDLKKKKALSSMGANYSSYLAKADQKRGKKQTAREMKKKILAERRKPLNIDHLSDEKLRDKAKELWDTLYQLETDKFEFGEKLKRQKYDIMNVRARVEMLAKFSKKAGTTAKGKVGGRWK.

The segment covering 1–21 has biased composition (acidic residues); that stretch reads MSDEEVEHVEEQYEEEEEAQE. Residues 1 to 82 form a disordered region; it reads MSDEEVEHVE…EKVDFDDIQK (82 aa). Ser2 bears the N-acetylserine mark. Position 2 is a phosphoserine (Ser2). Composition is skewed to basic and acidic residues over residues 28-49 and 70-82; these read EVHE…ALED and PEGE…DIQK. Residue Ser98 is modified to Phosphoserine. The span at 121–163 shows a compositional bias: basic and acidic residues; it reads RAERAEQQRIRAEKERERQNRLAEEKARREEEDAKRRAEEDLK. Residues 121-200 form a disordered region; the sequence is RAERAEQQRI…TAREMKKKIL (80 aa). Phosphoserine occurs at positions 169, 176, and 177. Residues 191 to 200 are compositionally biased toward basic and acidic residues; it reads TAREMKKKIL. The residue at position 213 (Ser213) is a Phosphoserine. Phosphotyrosine is present on Tyr229.

This sequence belongs to the troponin T family.

Its function is as follows. Troponin T is the tropomyosin-binding subunit of troponin, the thin filament regulatory complex which confers calcium-sensitivity to striated muscle actomyosin ATPase activity. The polypeptide is Troponin T, fast skeletal muscle (TNNT3) (Oryctolagus cuniculus (Rabbit)).